A 513-amino-acid polypeptide reads, in one-letter code: GMP synthase [glutamine-hydrolyzing] (513 aa).

The 191-residue stretch at 8 to 198 (MILVLDFGSQ…VFGVCDCEGK (191 aa)) folds into the Glutamine amidotransferase type-1 domain. The active-site Nucleophile is the C85. Catalysis depends on residues H172 and E174. The region spanning 199 to 388 (WSMENFIEIE…LGLPDDIVWR (190 aa)) is the GMPS ATP-PPase domain. 226 to 232 (SGGVDSS) lines the ATP pocket.

In terms of assembly, homodimer.

The enzyme catalyses XMP + L-glutamine + ATP + H2O = GMP + L-glutamate + AMP + diphosphate + 2 H(+). Its pathway is purine metabolism; GMP biosynthesis; GMP from XMP (L-Gln route): step 1/1. Functionally, catalyzes the synthesis of GMP from XMP. The sequence is that of GMP synthase [glutamine-hydrolyzing] from Bacillus velezensis (strain DSM 23117 / BGSC 10A6 / LMG 26770 / FZB42) (Bacillus amyloliquefaciens subsp. plantarum).